The sequence spans 111 residues: Dynein light chain Tctex-type (111 aa).

It belongs to the dynein light chain Tctex-type family. The cytoplasmic dynein complex consists of two catalytic heavy chains (HCs) and a number of non-catalytic subunits presented by intermediate chains (ICs), light intermediate chains (LICs) and light chains (LCs).

It localises to the cytoplasm. It is found in the cytoskeleton. Its function is as follows. Acts as one of several non-catalytic accessory components of the cytoplasmic dynein complex that are thought to be involved in linking dynein to cargos and to adapter proteins that regulate dynein function. Cytoplasmic dynein acts as a motor for the intracellular retrograde motility of vesicles and organelles along microtubules. Required for spermatid differentiation. Is not required for polarized transport in rhabdomere development and appears to be a non-essential component of the cytoplasmic dynein complex. The protein is Dynein light chain Tctex-type (Dlc90F) of Drosophila melanogaster (Fruit fly).